The sequence spans 102 residues: Legumin-like protein Mac i 2 (102 aa).

It belongs to the 11S seed storage protein (globulins) family.

Its function is as follows. Seed storage protein. The sequence is that of Legumin-like protein Mac i 2 from Macadamia integrifolia (Macadamia nut).